Consider the following 131-residue polypeptide: Global transcriptional regulator Spx (131 aa).

The short motif at 10 to 13 is the CXXC element; the sequence is CTSC. Cys10 and Cys13 are disulfide-bonded.

It belongs to the ArsC family. Spx subfamily. In terms of assembly, interacts with the C-terminal domain of the alpha subunit of the RNAP. A single Spx monomer interacts with RNAP to form the transcription activation complex. Interacts with the adapter protein SpxH/YjbH.

The protein localises to the cytoplasm. Under non-stress conditions, Spx is degraded by ClpXP and, to a lesser extent, by ClpCP. Efficient dedradation by ClpXP requires the adapter protein SpxH/YjbH. Binding to SpxH/YjbH reduces the overall conformational flexibility of Spx and stabilizes the C-terminal ClpX recognition region of Spx. In addition, activity is modulated by the formation of a disulfide bound within the N-terminal Cys-X-X-Cys (CXXC) motif, which is required for the transcriptional activation of trxA and trxB, or for the activation of msrAB operon expression following paraquat oxidative stress. However, it seems that formation of the disulfide bound is not essential for induction of all Spx-controlled genes, as for example the case of BSH biosynthesis genes. Similarly, induction of the Spx regulon during cell wall stress is not accompanied by oxidation of the disulfide switch, but requires Spx stabilization by the anti-adapter protein SpxO/YirB. Functionally, global transcriptional regulator that plays a key role in stress response and exerts either positive or negative regulation of genes. Acts by interacting with the C-terminal domain of the alpha subunit of the RNA polymerase (RNAP). This interaction can enhance binding of RNAP to the promoter region of target genes and stimulate their transcription, or block interaction of RNAP with activator proteins and repress transcription. Exhibits no DNA-binding activity. Induces the expression of a large number of genes in response to a variety of stress conditions, such as disulfide, heat and cell wall stress, while concurrently repressing transcription of genes involved in various developmental and growth-related pathways during periods of extreme stress. Functions in the oxidative stress response via induction of the transcription of thioredoxin (trxA) and thioredoxin reductase (trxB) during thiol-specific oxidative (disulfide) stress. Mediates response to oxidative stress caused by paraquat (PQ) via induction of the methionine sulfoxide reductase genes, msrA and msrB. Also acts as a transcriptional activator of the bacillithiol (BSH) biosynthesis genes in response to oxidizing conditions and thio-reactive compounds. Involved in heat stress response and thermotolerance development, which results in diminished cellular protein aggregates. Plays an important adaptive role in the cell wall stress response. Participates in sulfate-dependent control of organosulfur metabolism. Negatively controls, via CymR, the expression of the organosulfur utilization operons ytmI, yxeI and ssu, and directly activates yrrT operon expression during growth in medium containing methionine as sole sulfur source. Negatively affects competence and sporulation. Inhibits biofilm formation in response to disulfide stress by repressing biofilm matrix genes. This chain is Global transcriptional regulator Spx, found in Bacillus subtilis (strain 168).